Here is a 7031-residue protein sequence, read N- to C-terminus: MNYRDKIQKFSIRKYTVGTFSTVIATLVFLGFNTSQAHAAETNQPASVVKQKQQSNNEQTENRESQVQNSQNSQNGQSLSATHENEQPNISQANLVDQKVAQSSTTNDEQPASQNVNTKKDSATAATTQPDKEQSKHKQNESQSANKNGNDNRAAHVENHEANVVTASDSSDNGNVQHDRNELQAFFDANYHDYRFIDRENADSGTFNYVKGIFDKINTLLGSNDPINNKDLQLAYKELEQAVALIRTMPQRQQTSRRSNRIQTRSVESRAAEPRSVSDYQNANSSYYVENANDGSGYPVGTYINASSKGAPYNLPTTPWNTLKASDSKEIALMTAKQTGDGYQWVIKFNKGHAPHQNMIFWFALPADQVPVGRTDFVTVNSDGTNVQWSHGAGAGANKPLQQMWEYGVNDPHRSHDFKIRNRSGQVIYDWPTVHIYSLEDLSRASDYFSEAGATPATKAFGRQNFEYINGQKPAESPGVPKVYTFIGQGDASYTISFKTQGPTVNKLYYAAGGRALEYNQLFMYSQLYVESTQDHQQRLNGLRQVVNRTYRIGTTKRVEVSQGNVQTKKVLESTNLNIDDFVDDPLSYVKTPSNKVLGFYSNNANTNAFRPGGAQQLNEYQLSQLFTDQKLQEAARTRNPIRLMIGFDYPDAYGNSETLVPVNLTVLPEIQHNIKFFKNDDTQNIAEKPFSKQAGHPVFYVYAGNQGNASVNLGGSVTSIQPLRINLTSNENFTDKDWQITGIPRTLHIENSTNRPNNARERNIELVGNLLPGDYFGTIRFGRKEQLFEIRVKPHTPTITTTAEQLRGTALQKVPVNISGIPLDPSALVYLVAPTNQTTNGGSEADQIPSGYTILATGTPDGVHNTITIRPQDYVVFIPPVGKQIRAVVYYNKVVASNMSNAVTILPDDIPPTINNPVGINAKYYRGDEVNFTMGVSDRHSGIKNTTITTLPNGWTSNLTKADKNNGSLSITGRVSMNQAFNSDITFKVSATDNVNNTTNDSQSKHVSIHVGKISEDAHPIVLGNTEKVVVVNPTAVSNDEKQSIITAFMNKNQNIRGYLASTDPVTVDNNGNVTLHYRDGSSTTLDATNVMTYEPVVKPEYQTVNAAKTATVTIAKGQSFSIGDIKQYFTLSNGQPIPSGTFTNITSDRTIPTAQEVSQMNAGTQLYHITATNAYHKDSEDFYISLKIIDVKQPEGDQRVYRTSTYDLTTDEISKVKQAFINANRDVITLAEGDISVTNTPNGANVSTITVNINKGRLTKSFASNLANMNFLRWVNFPQDYTVTWTNAKIANRPTDGGLSWSDDHKSLIYRYDATLGTQITTNDILTMLKATTTVPGLRNNITGNEKSQAEAGGRPNFRTTGYSQSNATTDGQRQFTLNGQVIQVLDIINPSNGYGGQPVTNSNTRANHSNSTVVNVNEPAANGAGAFTIDHVVKSNSTHNASDAVYKAQLYLTPYGPKQYVEHLNQNTGNTTDAINIYFVPSDLVNPTISVGNYTNHQVFSGETFTNTITANDNFGVQSVTVPNTSQITGTVDNNHQHVSATAPNVTSATNKTINLLATDTSGNTATTSFNVTVKPLRDKYRVGTSSTAANPVRIANISNNATVSQADQTTIINSLTFTETVPNRSYARASANEITSKTVSNVSRTGNNANVTVTVTYQDGTTSTVTVPVKHVIPEIVAHSHYTVQGQDFPAGNGSSASDYFKLSNGSDIADATITWVSGQAPNKDNTRIGEDITVTAHILIDGETTPITKTATYKVVRTVPKHVFETARGVLYPGVSDMYDAKQYVKPVNNSWSTNAQHMNFQFVGTYGPNKDVVGISTRLIRVTYDNRQTEDLTILSKVKPDPPRIDANSVTYKAGLTNQEIKVNNVLNNSSVKLFKADNTPLNVTNITHGSGFSSVVTVSDALPNGGIKAKSSISMNNVTYTTQDEHGQVVTVTRNESVDSNDSATVTVTPQLQATTEGAVFIKGGDGFDFGHVERFIQNPPHGATVAWHDSPDTWKNTVGNTHKTAVVTLPNGQGTRNVEVPVKVYPVANAKAPSRDVKGQNLTNGTDAMNYITFDPNTNTNGITAAWANRQQPNNQQAGVQHLNVDVTYPGISAAKRVPVTVNVYQFEFPQTTYTTTVGGTLASGTQASGYAHMQNATGLPTDGFTYKWNRDTTGTNDANWSAMNKPNVAKVVNAKYDVIYNGHTFATSLPAKFVVKDVQPAKPTVTETAAGAITIAPGANQTVNTHAGNVTTYADKLVIKRNGNVVTTFTRRNNTSPWVKEASAATVAGIAGTNNGITVAAGTFNPADTIQVVATQGSGETVSDEQRSDDFTVVAPQPNQATTKIWQNGHIDITPNNPSGHLINPTQAMDIAYTEKVGNGAEHSKTINVVRGQNNQWTIANKPDYVTLDAQTGKVTFNANTIKPNSSITITPKAGTGHSVSSNPSTLTAPAAHTVNTTEIVKDYGSNVTAAEINNAVQVANKRTATIKNGTAMPTNLAGGSTTTIPVTVTYNDGSTEEVQESIFTKADKRELITAKNHLDDPVSTEGKKPGTITQYNNAMHNAQQQINTAKTEAQQVINNERATPQQVSDALTKVRAAQTKIDQAKALLQNKEDNSQLVTSKNNLQSSVNQVPSTAGMTQQSIDNYNAKKREAETEITAAQRVIDNGDATAQQISDEKHRVDNALTALNQAKHDLTADTHALEQAVQQLNRTGTTTGKKPASITAYNNSIRALQSDLTSAKNSANAIIQKPIRTVQEVQSALTNVNRVNERLTQAINQLVPLADNSALKTAKTKLDEEINKSVTTDGMTQSSIQAYENAKRAGQTESTNAQNVINNGDATDQQIAAEKTKVEEKYNSLKQAIAGLTPDLAPLQTAKTQLQNDIDQPTSTTGMTSASIAAFNEKLSAARTKIQEIDRVLASHPDVATIRQNVTAANAAKSALDQARNGLTVDKAPLENAKNQLQHSIDTQTSTTGMTQDSINAYNAKLTAARNKIQQINQVLAGSPTVEQINTNTSTANQAKSDLDHARQALTPDKAPLQTAKTQLEQSINQPTDTTGMTTASLNAYNQKLQAARQKLTEINQVLNGNPTVQNINDKVTEANQAKDQLNTARQGLTLDRQPALTTLHGASNLNQAQQNNFTQQINAAQNHAALETIKSNITALNTAMTKLKDSVADNNTIKSDQNYTDATPANKQAYDNAVNAAKGVIGETTNPTMDVNTVNQKAASVKSTKDALDGQQNLQRAKTEATNAITHASDLNQAQKNALTQQVNSAQNVQAVNDIKQTTQSLNTAMTGLKRGVANHNQVVQSDNYVNADTNKKNDYNNAYNHANDIINGNAQHPVITPSDVNNALSNVTSKEHALNGEAKLNAAKQEANTALGHLNNLNNAQRQNLQSQINGAHQIDAVNTIKQNATNLNSAMGNLRQAVADKDQVKRTEDYADADTAKQNAYNSAVSSAETIINQTTNPTMSVDDVNRATSAVTSNKNALNGYEKLAQSKTDAARAIDALPHLNNAQKADVKSKINAASNIAGVNTVKQQGTDLNTAMGNLQGAINDEQTTLNSQNYQDATPSKKTAYTNAVQAAKDILNKSNGQNKTKDQVTEAMNQVNSAKNNLDGTRLLDQAKQTAKQQLNNMTHLTTAQKTNLTNQINSGTTVAGVQTVQSNANTLDQAMNTLRQSIANKDATKASEDYVDANNDKQTAYNNAVAAAETIINANSNPEMNPSTITQKAEQVNSSKTALNGDENLAAAKQNAKTYLNTLTSITDAQKNNLISQITSATRVSGVDTVKQNAQHLDQAMASLQNGINNESQVKSSEKYRDADTNKQQEYDNAITAAKAILNKSTGPNTAQNAVEAALQRVNNAKDALNGDAKLIAAQNAAKQHLGTLTHITTAQRNDLTNQISQATNLAGVESVKQNANSLDGAMGNLQTAINDKSGTLASQNFLDADEQKRNAYNQAVSAAETILNKQTGPNTAKTAVEQALNNVNNAKHALNGTQNLNNAKQAAITAINGASDLNQKQKDALKAQANGAQRVSNAQDVQHNATELNTAMGTLKHAIADKTNTLASSKYVNADSTKQNAYTTKVTNAEHIISGTPTVVTTPSEVTAAANQVNSAKQELNGDERLREAKQNANTAIDALTQLNTPQKAKLKEQVGQANRLEDVQTVQTNGQALNNAMKGLRDSIANETTVKTSQNYTDASPNNQSTYNSAVSNAKGIINQTNNPTMDTSAITQATTQVNNAKNGLNGAENLRNAQNTAKQNLNTLSHLTNNQKSAISSQIDRAGHVSEVTATKNAATELNTQMGNLEQAIHDQNTVKQSVKFTDADKAKRDAYTNAVSRAEAILNKTQGANTSKQDVEAAIQNVSSAKNALNGDQNVTNAKNAAKNALNNLTSINNAQKRDLTTKIDQATTVAGVEAVSNTSTQLNTAMANLQNGINDKTNTLASENYHDADSDKKTAYTQAVTNAENILNKNSGSNLDKTAVENALSQVANAKGALNGNHNLEQAKSNANTTINGLQHLTTAQKDKLKQQVQQAQNVAGVDTVKSSANTLNGAMGTLRNSIQDNTATKNGQNYLDATERNKTNYNNAVDSANGVINATSNPNMDANAINQIATQVTSTKNALDGTHNLTQAKQTATNAIDGATNLNKAQKDALKAQVTSAQRVANVTSIQQTANELNTAMGQLQHGIDDENATKQTQKYRDAEQSKKTAYDQAVAAAKAILNKQTGSNSDKAAVDRALQQVTSTKDALNGDAKLAEAKAAAKQNLGTLNHITNAQRTDLEGQINQATTVDGVNTVKTNANTLDGAMNSLQGSINDKDATLRNQNYLDADESKRNAYTQAVTAAEGILNKQTGGNTSKADVDNALNAVTRAKAALNGADNLRNAKTSATNTIDGLPNLTQLQKDNLKHQVEQAQNVAGVNGVKDKGNTLNTAMGALRTSIQNDNTTKTSQNYLDASDSNKNNYNTAVNNANGVINATNNPNMDANAINGMANQVNTTKAALNGAQNLAQAKTNATNTINNAHDLNQKQKDALKTQVNNAQRVSDANNVQHTATELNSAMTALKAAIADKERTKASGNYVNADQEKRQAYDSKVTNAENIISGTPNATLTVNDVNSAASQVNAAKTALNGDNNLRVAKEHANNTIDGLAQLNNAQKAKLKEQVQSATTLDGVQTVKNSSQTLNTAMKGLRDSIANEATIKAGQNYTDASPNNRNEYDSAVTAAKAIINQTSNPTMEPNTITQVTSQVTTKEQALNGARNLAQAKTTAKNNLNNLTSINNAQKDALTRSIDGATTVAGVNQETAKATELNNAMHSLQNGINDETQTKQTQKYLDAEPSKKSAYDQAVNAAKAILTKASGQNVDKAAVEQALQNVNSTKTALNGDAKLNEAKAAAKQTLGTLTHINNAQRTALDNEITQATNVEGVNTVKAKAQQLDGAMGQLETSIRDKDTTLQSQNYQDADDAKRTAYSQAVNAAATILNKTAGGNTPKADVERAMQAVTQANTALNGIQNLDRAKQAANTAITNASDLNTKQKEALKAQVTSAGRVSAANGVEHTATELNTAMTALKRAIADKAETKASGNYVNADANKRQAYDEKVTAAENIVSGTPTPTLTPADVTNAATQVTNAKTQLNGNHNLEVAKQNANTAIDGLTSLNGPQKAKLKEQVGQATTLPNVQTVRDNAQTLNTAMKGLRDSIANEATIKAGQNYTDASQNKQTDYNSAVTAAKAIIGQTTSPSMNAQEINQAKDQVTAKQQALNGQENLRTAQTNAKQHLNGLSDLTDAQKDAVKRQIEGATHVNEVTQAQNNADALNTAMTNLKNGIQDQNTIKQGVNFTDADEAKRNAYTNAVTQAEQILNKAQGPNTSKDGVETALENVQRAKNELNGNQNVANAKTTAKNALNNLTSINNAQKEALKSQIEGATTVAGVNQVSTTASELNTAMSNLQNGINDEAATKAAQKYTDADREKQTAYNDAVTAAKTLLDKTAGSNDNKAAVEQALQRVNTAKTALNGDERLNEAKNTAKQQVATMSHLTDAQKANLTSQIESGTTVAGVQGIQANAGTLDQAMNQLRQSIASKDATKSSEDYQDANADLQNAYNDAVTNAEGIISATNNPEMNPDTINQKASQVNSAKSALNGDEKLAAAKQTAKSDIGRLTDLNNAQRTAANAEVDQAPNLAAVTAAKNKATSLNTAMGNLKHALAEKDNTKRSVNYTDADQPKQQAYDTAVTQAEAITNANGSNANETQVQAALNQLNQAKNDLNGDNKVAQAKESAKRALASYSNLNNAQSTAATSQIDNATTVAGVTAAQNTANELNTAMGQLQNGINDQNTVKQQVNFTDADQGKKDAYTNAVTNAQGILDKAHGQNMTKAQVEAALNQVTTAKNALNGDANVRQAKSDAKANLGTLTHLNNAQKQDLTSQIEGATTVNGVNGVKTKAQDLDGAMQRLQSAIANKDQTKASENYIDADPTKKTAFDNAITQAESYLNKDHGANKDKQAVEQAIQSVTSTENALNGDANLQRAKTEAIQAIDNLTHLNTPQKTALKQQVNAAQRVSGVTDLKNSATSLNNAMDQLKQAIADHDTIVASGNYTNASPDKQGAYTDAYNAAKNIVNGSPNVITNAADVTAATQRVNNAETGLNGDTNLATAKQQAKDALRQMTHLSDAQKQSITGQIDSATQVTGVQSVKDNATNLDNAMNQLRNSIANKDDVKASQPYVDADRDKQNAYNTAVTNAENIINATSQPTLDPSAVTQAANQVSTNKTALNGAQNLANKKQETTANINQLSHLNNAQKQDLNTQVTNAPNISTVNQVKTKAEQLDQAMERLINGIQDKDQVKQSVNFTDADPEKQTAYNNAVTAAENIINQANGTNANQSQVEAALSTVTTTKQALNGDRKVTDAKNNANQTLSTLDNLNNAQKGAVTGNINQAHTVAEVTQAIQTAQELNTAMGNLKNSLNDKDTTLGSQNFADADPEKKNAYNEAVHNAENILNKSTGTNVPKDQVEAAMNQVNATKAALNGTQNLEKAKQHANTAIDGLSHLTNAQK.

The N-terminal stretch at 1–39 (MNYRDKIQKFSIRKYTVGTFSTVIATLVFLGFNTSQAHA) is a signal peptide. Over residues 41 to 59 (ETNQPASVVKQKQQSNNEQ) the composition is skewed to polar residues. Disordered stretches follow at residues 41 to 86 (ETNQ…HENE), 99 to 152 (KVAQ…GNDN), 250 to 277 (PQRQ…PRSV), 1342 to 1373 (NNIT…ATTD), and 2418 to 2438 (TITP…TLTA). The segment covering 65–80 (SQVQNSQNSQNGQSLS) has biased composition (low complexity). Over residues 99–117 (KVAQSSTTNDEQPASQNVN) the composition is skewed to polar residues. A compositionally biased stretch (basic and acidic residues) spans 130-140 (PDKEQSKHKQN). Composition is skewed to polar residues over residues 141–151 (ESQSANKNGND), 250–266 (PQRQ…QTRS), 1360–1373 (FRTT…ATTD), and 2427–2438 (HSVSSNPSTLTA). 38 consecutive FIVAR domains span residues 2524-2580 (AKNH…VSDA), 2610-2666 (SKNN…ISDE), 2687-2750 (DTHA…VQSA), 2780-2836 (AKTK…IAAE), 2864-2919 (AKTQ…IRQN), 2947-3002 (AKNQ…INTN), 3030-3085 (AKTQ…INDK), 3154-3212 (AMTK…VNQK), 3280-3339 (AMTG…VNNA), 3407-3465 (AMGN…VNRA), 3533-3591 (AMGN…VTEA), 3659-3717 (AMNT…ITQK), 3785-3843 (AMAS…VEAA), 3911-3969 (AMGN…VEQA), 4037-4095 (AMGT…VTAA), 4163-4221 (AMKG…ITQA), 4289-4347 (QMGN…VEAA), 4415-4473 (AMAN…VENA), 4541-4599 (AMGT…INQI), 4667-4725 (AMGQ…VDRA), 4793-4851 (AMNS…VDNA), 4919-4977 (AMGA…INGM), 5045-5103 (AMTA…VNSA), 5171-5229 (AMKG…ITQV), 5297-5355 (AMHS…VEQA), 5423-5481 (AMGQ…VERA), 5549-5607 (AMTA…VTNA), 5675-5733 (AMKG…INQA), 5801-5859 (AMTN…VETA), 5927-5985 (AMSN…VEQA), 6053-6111 (AMNQ…INQK), 6179-6236 (AMGN…VQAA), 6304-6362 (AMGQ…VEAA), 6430-6488 (AMQR…VEQA), 6556-6614 (AMDQ…VTAA), 6682-6740 (AMNQ…VTQA), 6818-6866 (DKDQ…VEAA), and 6934-6992 (AMGN…VEAA).

The protein is Extracellular matrix-binding protein EbhB (ebhB) of Staphylococcus aureus (strain Newman).